Consider the following 248-residue polypeptide: Ribonuclease PH (248 aa).

Phosphate-binding positions include arginine 86 and 124-126 (GTR).

It belongs to the RNase PH family. Homohexameric ring arranged as a trimer of dimers.

The enzyme catalyses tRNA(n+1) + phosphate = tRNA(n) + a ribonucleoside 5'-diphosphate. Phosphorolytic 3'-5' exoribonuclease that plays an important role in tRNA 3'-end maturation. Removes nucleotide residues following the 3'-CCA terminus of tRNAs; can also add nucleotides to the ends of RNA molecules by using nucleoside diphosphates as substrates, but this may not be physiologically important. Probably plays a role in initiation of 16S rRNA degradation (leading to ribosome degradation) during starvation. The chain is Ribonuclease PH from Clostridium perfringens (strain SM101 / Type A).